We begin with the raw amino-acid sequence, 481 residues long: ATP synthase subunit beta (481 aa).

G154–T161 contributes to the ATP binding site.

It belongs to the ATPase alpha/beta chains family. In terms of assembly, F-type ATPases have 2 components, CF(1) - the catalytic core - and CF(0) - the membrane proton channel. CF(1) has five subunits: alpha(3), beta(3), gamma(1), delta(1), epsilon(1). CF(0) has three main subunits: a(1), b(2) and c(9-12). The alpha and beta chains form an alternating ring which encloses part of the gamma chain. CF(1) is attached to CF(0) by a central stalk formed by the gamma and epsilon chains, while a peripheral stalk is formed by the delta and b chains.

The protein localises to the cell inner membrane. It carries out the reaction ATP + H2O + 4 H(+)(in) = ADP + phosphate + 5 H(+)(out). Its function is as follows. Produces ATP from ADP in the presence of a proton gradient across the membrane. The catalytic sites are hosted primarily by the beta subunits. This Novosphingobium aromaticivorans (strain ATCC 700278 / DSM 12444 / CCUG 56034 / CIP 105152 / NBRC 16084 / F199) protein is ATP synthase subunit beta.